The following is a 570-amino-acid chain: Coiled-coil domain-containing protein 22 homolog (570 aa).

Disordered stretches follow at residues 110-129 and 234-280; these read RQSE…REQL and LTST…PLEL. A compositionally biased stretch (polar residues) spans 248-257; it reads TSPTQTSTTA. Over residues 265-276 the composition is skewed to low complexity; the sequence is SSEATATSTTTT. Coiled-coil stretches lie at residues 308-471 and 529-570; these read ELKI…LQRQ and GEKL…ITVG.

Belongs to the CCDC22 family.

This chain is Coiled-coil domain-containing protein 22 homolog, found in Drosophila willistoni (Fruit fly).